A 260-amino-acid polypeptide reads, in one-letter code: Potassium inward rectifier (Kir)-like channel 3 (260 aa).

Residues 1-34 (MPMTPSEFKNRLLFGSLPRSSSDPTDLQFTEPNV) are disordered. Residues 1–68 (MPMTPSEFKN…EQSVSKSIAR (68 aa)) are Cytoplasmic-facing. The span at 18 to 31 (PRSSSDPTDLQFTE) shows a compositional bias: polar residues. Residues 69–89 (QALALLVVYLSLGVLIYWLTL) traverse the membrane as a helical segment. Residues 127-146 (DSFCFSVMMVTTVGFGDRAF) constitute an intramembrane region (pore-forming). The helical transmembrane segment at 153 to 173 (FLAAVWLLVSTLAVARAFLFL) threads the bilayer. At 174–260 (ADARADKRNR…LVDLTTATSV (87 aa)) the chain is on the cytoplasmic side. 2 consecutive EF-hand domains span residues 190–225 (LGES…QMEK) and 229–256 (EDFI…DLTT). Ca(2+)-binding residues include Asp203, Asp205, Asp207, Arg209, Glu214, Asp242, Ser246, Arg248, and Asp253.

It belongs to the two pore domain potassium channel (TC 1.A.1.7) family. Homotetramer. In terms of tissue distribution, expressed in hydathodes and the vascular tissues of roots, stems, leaves and flowers.

The protein resides in the vacuole membrane. Functionally, probable calcium-activated potassium channel. In Arabidopsis thaliana (Mouse-ear cress), this protein is Potassium inward rectifier (Kir)-like channel 3 (KCO3).